Reading from the N-terminus, the 234-residue chain is Inosine triphosphate pyrophosphatase (234 aa).

Residue 11 to 16 (SGNKGK) participates in ITP binding. E40 contacts Mg(2+). Residues K53, 81–82 (DT), K98, 176–179 (FGWD), K203, and 208–209 (HR) contribute to the ITP site.

This sequence belongs to the HAM1 NTPase family. As to quaternary structure, homodimer. The cofactor is Mg(2+). Mn(2+) is required as a cofactor.

The protein resides in the cytoplasm. It carries out the reaction ITP + H2O = IMP + diphosphate + H(+). The enzyme catalyses dITP + H2O = dIMP + diphosphate + H(+). It catalyses the reaction XTP + H2O = XMP + diphosphate + H(+). Pyrophosphatase that hydrolyzes non-canonical purine nucleotides such as inosine triphosphate (ITP), deoxyinosine triphosphate (dITP) or xanthosine 5'-triphosphate (XTP) to their respective monophosphate derivatives. The enzyme does not distinguish between the deoxy- and ribose forms. Probably excludes non-canonical purines from RNA and DNA precursor pools, thus preventing their incorporation into RNA and DNA and avoiding chromosomal lesions. This Leishmania major protein is Inosine triphosphate pyrophosphatase.